Here is a 461-residue protein sequence, read N- to C-terminus: MPMLKIYNSITRQKQEFKPITPGKVGMYVCGVTVYDLCHIGHGRTFVSFDMIVRYLRYAGYEVNFQRNITDIDDKIIKRANENQEDCNTLTDRLIGEMHKDFDALNMIRPDFEPRATLHITEIIDMVERLLARGHAYVAADGDVLFSVASFPEYGRLSGQNLEQLQAGARVEVDDNKQNPMDFVLWKMSKPGEPTWESPWGPGRPGWHIECSAMNSKHLGLHFDIHGGGSDLQFPHHENEIAQSCCAHDTPYVNYWMHTGMVMVDREKMSKSLGNFFTIRDVLGHYDPETVRYFLLSGHYRSQINYSEENLKQARAALERLYTAIKDVDLTVAPAPAEEFVAKFKAAMDDDFNTPEAYSVLFDMVREINRLKTTDMAQASAMAVAMKQLADVLGLLHQAPDAFFKGEGSDDEVAEIEALIVERNRARVEKDWPAADVARNRLNELGVVLEDGPSGTTWRKK.

Cys-30 is a Zn(2+) binding site. The 'HIGH' region motif lies at 32-42 (VTVYDLCHIGH). Residues Cys-211, His-236, and Glu-240 each coordinate Zn(2+). Positions 268-272 (KMSKS) match the 'KMSKS' region motif. Lys-271 lines the ATP pocket.

The protein belongs to the class-I aminoacyl-tRNA synthetase family. As to quaternary structure, monomer. It depends on Zn(2+) as a cofactor.

It is found in the cytoplasm. It carries out the reaction tRNA(Cys) + L-cysteine + ATP = L-cysteinyl-tRNA(Cys) + AMP + diphosphate. The protein is Cysteine--tRNA ligase of Shewanella sp. (strain MR-4).